A 414-amino-acid chain; its full sequence is Esterase FrsA (414 aa).

It belongs to the FrsA family.

The catalysed reaction is a carboxylic ester + H2O = an alcohol + a carboxylate + H(+). Its function is as follows. Catalyzes the hydrolysis of esters. This Escherichia fergusonii (strain ATCC 35469 / DSM 13698 / CCUG 18766 / IAM 14443 / JCM 21226 / LMG 7866 / NBRC 102419 / NCTC 12128 / CDC 0568-73) protein is Esterase FrsA.